Here is a 174-residue protein sequence, read N- to C-terminus: Protein MOTHER of FT and TFL1 homolog 2 (174 aa).

This sequence belongs to the phosphatidylethanolamine-binding protein family.

May form complexes with phosphorylated ligands by interfering with kinases and their effectors. This chain is Protein MOTHER of FT and TFL1 homolog 2, found in Oryza sativa subsp. japonica (Rice).